The chain runs to 397 residues: MSESVHTNTSLWSKGMKAVIVAQFLSAFGDNALLFATLALLKAQFYPEWSQPILQMVFVGAYILFAPFVGQVADSFAKGRVMMFANGLKLLGAASICFGINPFLGYTLVGVGAAAYSPAKYGILGELTTGSKLVKANGLMEASTIAAILLGSVAGGVLADWHVLVALAACALAYGGAVVANIYIPKLAAARPGQSWNLINMTRSFLNACTSLWRNGETRFSLVGTSLFWGAGVTLRFLLVLWVPVALGITDNATPTYLNAMVAIGIVVGAGAAAKLVTLETVSRCMPAGILIGVVVLIFSLQHELLPAYALLMLIGVLGGFFVVPLNALLQERGKKSVGAGNAIAVQNLGENSAMLLMLGIYSLAVMVGIPVVPIGIGFGTLFALAITALWIWQRRH.

The Periplasmic portion of the chain corresponds to 1-17; the sequence is MSESVHTNTSLWSKGMK. The chain crosses the membrane as a helical span at residues 18–38; sequence AVIVAQFLSAFGDNALLFATL. The Cytoplasmic portion of the chain corresponds to 39 to 52; the sequence is ALLKAQFYPEWSQP. A helical membrane pass occupies residues 53 to 73; sequence ILQMVFVGAYILFAPFVGQVA. Topologically, residues 74–90 are periplasmic; sequence DSFAKGRVMMFANGLKL. A helical transmembrane segment spans residues 91 to 111; sequence LGAASICFGINPFLGYTLVGV. Residues 112–144 lie on the Cytoplasmic side of the membrane; sequence GAAAYSPAKYGILGELTTGSKLVKANGLMEAST. The helical transmembrane segment at 145–165 threads the bilayer; the sequence is IAAILLGSVAGGVLADWHVLV. Alanine 166 is a topological domain (periplasmic). The helical transmembrane segment at 167–187 threads the bilayer; the sequence is LAACALAYGGAVVANIYIPKL. The Cytoplasmic portion of the chain corresponds to 188 to 226; it reads AAARPGQSWNLINMTRSFLNACTSLWRNGETRFSLVGTS. Residues 227 to 247 traverse the membrane as a helical segment; that stretch reads LFWGAGVTLRFLLVLWVPVAL. Residues 248–256 lie on the Periplasmic side of the membrane; the sequence is GITDNATPT. The chain crosses the membrane as a helical span at residues 257 to 277; that stretch reads YLNAMVAIGIVVGAGAAAKLV. The Cytoplasmic portion of the chain corresponds to 278 to 280; the sequence is TLE. The helical transmembrane segment at 281 to 301 threads the bilayer; that stretch reads TVSRCMPAGILIGVVVLIFSL. At 302-304 the chain is on the periplasmic side; it reads QHE. The helical transmembrane segment at 305 to 325 threads the bilayer; sequence LLPAYALLMLIGVLGGFFVVP. Residues 326-343 are Cytoplasmic-facing; that stretch reads LNALLQERGKKSVGAGNA. A helical membrane pass occupies residues 344–364; it reads IAVQNLGENSAMLLMLGIYSL. The Periplasmic segment spans residues 365–366; it reads AV. A helical membrane pass occupies residues 367-387; that stretch reads MVGIPVVPIGIGFGTLFALAI. The Cytoplasmic segment spans residues 388–397; it reads TALWIWQRRH.

It belongs to the major facilitator superfamily. LplT (TC 2.A.1.42) family.

It is found in the cell inner membrane. In terms of biological role, catalyzes the facilitated diffusion of 2-acyl-glycero-3-phosphoethanolamine (2-acyl-GPE) into the cell. This is Lysophospholipid transporter LplT from Escherichia coli O9:H4 (strain HS).